A 634-amino-acid chain; its full sequence is Mediator of RNA polymerase II transcription subunit 17 (634 aa).

2 disordered regions span residues 51–73 and 606–626; these read DKHKDPWAEDEESDGQSAADVDT and DEKASRAQSWKPDSTTPGSPG. A compositionally biased stretch (polar residues) spans 611–623; the sequence is RAQSWKPDSTTPG.

This sequence belongs to the Mediator complex subunit 17 family. Component of the Mediator complex.

The protein localises to the nucleus. Component of the Mediator complex, a coactivator involved in the regulated transcription of nearly all RNA polymerase II-dependent genes. Mediator functions as a bridge to convey information from gene-specific regulatory proteins to the basal RNA polymerase II transcription machinery. Mediator is recruited to promoters by direct interactions with regulatory proteins and serves as a scaffold for the assembly of a functional preinitiation complex with RNA polymerase II and the general transcription factors. The chain is Mediator of RNA polymerase II transcription subunit 17 (srb4) from Aspergillus terreus (strain NIH 2624 / FGSC A1156).